Consider the following 140-residue polypeptide: Nucleoside diphosphate kinase (140 aa).

6 residues coordinate ATP: lysine 9, phenylalanine 57, arginine 85, threonine 91, arginine 102, and asparagine 112. Histidine 115 functions as the Pros-phosphohistidine intermediate in the catalytic mechanism.

This sequence belongs to the NDK family. In terms of assembly, homotetramer. It depends on Mg(2+) as a cofactor.

The protein resides in the cytoplasm. It catalyses the reaction a 2'-deoxyribonucleoside 5'-diphosphate + ATP = a 2'-deoxyribonucleoside 5'-triphosphate + ADP. The enzyme catalyses a ribonucleoside 5'-diphosphate + ATP = a ribonucleoside 5'-triphosphate + ADP. In terms of biological role, major role in the synthesis of nucleoside triphosphates other than ATP. The ATP gamma phosphate is transferred to the NDP beta phosphate via a ping-pong mechanism, using a phosphorylated active-site intermediate. The protein is Nucleoside diphosphate kinase of Chlorobium limicola (strain DSM 245 / NBRC 103803 / 6330).